A 347-amino-acid chain; its full sequence is S-adenosylmethionine:tRNA ribosyltransferase-isomerase (347 aa).

The protein belongs to the QueA family. As to quaternary structure, monomer.

The protein localises to the cytoplasm. The catalysed reaction is 7-aminomethyl-7-carbaguanosine(34) in tRNA + S-adenosyl-L-methionine = epoxyqueuosine(34) in tRNA + adenine + L-methionine + 2 H(+). The protein operates within tRNA modification; tRNA-queuosine biosynthesis. In terms of biological role, transfers and isomerizes the ribose moiety from AdoMet to the 7-aminomethyl group of 7-deazaguanine (preQ1-tRNA) to give epoxyqueuosine (oQ-tRNA). This is S-adenosylmethionine:tRNA ribosyltransferase-isomerase from Methylococcus capsulatus (strain ATCC 33009 / NCIMB 11132 / Bath).